Here is a 91-residue protein sequence, read N- to C-terminus: Small ribosomal subunit protein uS19 (91 aa).

It belongs to the universal ribosomal protein uS19 family.

Functionally, protein S19 forms a complex with S13 that binds strongly to the 16S ribosomal RNA. This is Small ribosomal subunit protein uS19 from Lactobacillus delbrueckii subsp. bulgaricus (strain ATCC 11842 / DSM 20081 / BCRC 10696 / JCM 1002 / NBRC 13953 / NCIMB 11778 / NCTC 12712 / WDCM 00102 / Lb 14).